The sequence spans 158 residues: NAD(P)H-quinone oxidoreductase subunit J, chloroplastic (158 aa).

It belongs to the complex I 30 kDa subunit family. In terms of assembly, NDH is composed of at least 16 different subunits, 5 of which are encoded in the nucleus.

The protein localises to the plastid. It localises to the chloroplast thylakoid membrane. The catalysed reaction is a plastoquinone + NADH + (n+1) H(+)(in) = a plastoquinol + NAD(+) + n H(+)(out). It catalyses the reaction a plastoquinone + NADPH + (n+1) H(+)(in) = a plastoquinol + NADP(+) + n H(+)(out). Its function is as follows. NDH shuttles electrons from NAD(P)H:plastoquinone, via FMN and iron-sulfur (Fe-S) centers, to quinones in the photosynthetic chain and possibly in a chloroplast respiratory chain. The immediate electron acceptor for the enzyme in this species is believed to be plastoquinone. Couples the redox reaction to proton translocation, and thus conserves the redox energy in a proton gradient. The chain is NAD(P)H-quinone oxidoreductase subunit J, chloroplastic from Angiopteris evecta (Mule's foot fern).